We begin with the raw amino-acid sequence, 633 residues long: Putative ankyrin repeat protein L774 (633 aa).

ANK repeat units lie at residues 91–120, 123–152, 221–250, 252–275, 338–367, 369–393, and 517–546; these read IYGH…EYDP, NCDD…FFKI, NVNK…EYDF, TILK…ILDS, DYDV…DVNN, MTYA…TLST, and DNLK…NSND.

This is Putative ankyrin repeat protein L774 from Acanthamoeba polyphaga mimivirus (APMV).